A 339-amino-acid polypeptide reads, in one-letter code: Glycerol-3-phosphate dehydrogenase [NAD(P)+] (339 aa).

The NADPH site is built by Ser15, Tyr16, His36, and Lys110. Sn-glycerol 3-phosphate contacts are provided by Lys110, Gly139, and Thr141. Ala143 lines the NADPH pocket. The sn-glycerol 3-phosphate site is built by Lys195, Asp248, Ser258, Arg259, and Asn260. Lys195 functions as the Proton acceptor in the catalytic mechanism. Residue Arg259 participates in NADPH binding. Residues Val283 and Glu285 each coordinate NADPH.

Belongs to the NAD-dependent glycerol-3-phosphate dehydrogenase family.

It localises to the cytoplasm. It carries out the reaction sn-glycerol 3-phosphate + NAD(+) = dihydroxyacetone phosphate + NADH + H(+). It catalyses the reaction sn-glycerol 3-phosphate + NADP(+) = dihydroxyacetone phosphate + NADPH + H(+). It functions in the pathway membrane lipid metabolism; glycerophospholipid metabolism. Catalyzes the reduction of the glycolytic intermediate dihydroxyacetone phosphate (DHAP) to sn-glycerol 3-phosphate (G3P), the key precursor for phospholipid synthesis. The protein is Glycerol-3-phosphate dehydrogenase [NAD(P)+] of Shigella flexneri serotype 5b (strain 8401).